We begin with the raw amino-acid sequence, 875 residues long: Peptidyl-glycine alpha-amidating monooxygenase B (875 aa).

An N-terminal signal peptide occupies residues 1-39; it reads MDMASLISSLLVLFLIFQNSCYCFRSPLSVFKRYEESTR. A peptidylglycine alpha-hydroxylating monooxygenase region spans residues 3–394; that stretch reads MASLISSLLV…KREEEEVLNQ (392 aa). Residues 40-763 lie on the Intragranular side of the membrane; it reads SLSNDCLGTT…PSVVQESSAG (724 aa). 5 disulfides stabilise this stretch: Cys-45-Cys-184, Cys-79-Cys-124, Cys-112-Cys-129, Cys-225-Cys-332, and Cys-291-Cys-313. 2 residues coordinate Cu(2+): His-105 and His-106. Positions 170, 240, 242, and 312 each coordinate Cu(2+). The interval 395 to 716 is peptidyl-alpha-hydroxyglycine alpha-amidating lyase; that stretch reads DVHLEEDTDW…SPSKAEHRSV (322 aa). Residue Arg-430 participates in a protein binding. Asn-465 is a glycosylation site (N-linked (GlcNAc...) asparagine). 3 NHL repeats span residues 467 to 508, 516 to 561, and 569 to 613; these read SKVL…VGAE, LGRA…FSPN, and GEET…FHAK. Disulfide bonds link Cys-530–Cys-551 and Cys-598–Cys-609. 2 residues coordinate a protein: Tyr-550 and Arg-602. Asn-662 carries an N-linked (GlcNAc...) asparagine glycan. The NHL 4 repeat unit spans residues 666–709; sequence GDILDTFIPARKNFEMPHDIAAGDDGTVYVGDAHANAVWKFSPS. Residues 735–755 are disordered; sequence HMRSRPKTNESVGQQTQEKPS. N-linked (GlcNAc...) asparagine glycosylation is present at Asn-743. A compositionally biased stretch (polar residues) spans 743 to 755; the sequence is NESVGQQTQEKPS. A helical transmembrane segment spans residues 764 to 787; sequence VSFVLIITLLIIPVVVLIAIAIFI. Residues 788 to 875 are Cytoplasmic-facing; sequence RWRKVRMYGG…APPIPPVSSS (88 aa). Positions 837-875 are disordered; the sequence is KGFDRLSTEGSDQEKDDDDDGSDSEEEYSAPPIPPVSSS. Acidic residues predominate over residues 850 to 864; sequence EKDDDDDGSDSEEEY.

It in the C-terminal section; belongs to the peptidyl-alpha-hydroxyglycine alpha-amidating lyase family. This sequence in the N-terminal section; belongs to the copper type II ascorbate-dependent monooxygenase family. Monomer. Zn(2+) serves as cofactor. Requires Cu(2+) as cofactor.

It is found in the cytoplasmic vesicle. It localises to the secretory vesicle membrane. The catalysed reaction is a [peptide]-C-terminal glycine + 2 L-ascorbate + O2 = a [peptide]-C-terminal (2S)-2-hydroxyglycine + 2 monodehydro-L-ascorbate radical + H2O. It carries out the reaction a [peptide]-C-terminal (2S)-2-hydroxyglycine = a [peptide]-C-terminal amide + glyoxylate. Bifunctional enzyme that catalyzes amidation of the C-terminus of proteins. Alpha-amidation is present at the C-terminus of many endocrine hormones and neuropeptides and is required for their activity. C-terminal amidation also takes place in response to protein fragmentation triggered by oxidative stress, promoting degradation of amidated protein fragments by the proteasome. Alpha-amidation involves two sequential reactions, both of which are catalyzed by separate catalytic domains of the enzyme. The first step, catalyzed by peptidyl alpha-hydroxylating monooxygenase (PHM) domain, is the copper-, ascorbate-, and O2- dependent stereospecific hydroxylation (with S stereochemistry) at the alpha-carbon (C-alpha) of the C-terminal glycine of the peptidylglycine substrate. The second step, catalyzed by the peptidylglycine amidoglycolate lyase (PAL) domain, is the zinc-dependent cleavage of the N-C-alpha bond, producing the alpha-amidated peptide and glyoxylate. In Xenopus laevis (African clawed frog), this protein is Peptidyl-glycine alpha-amidating monooxygenase B (pam-b).